The sequence spans 458 residues: Probable plasmid replicative DNA helicase (458 aa).

In terms of domain architecture, SF4 helicase spans 194 to 458 (KIDYVDGLPT…GKFTIQKEAW (265 aa)). 225–232 (ARPAMGKT) serves as a coordination point for ATP.

This sequence belongs to the helicase family. DnaB subfamily. In terms of assembly, homohexamer.

It carries out the reaction Couples ATP hydrolysis with the unwinding of duplex DNA at the replication fork by translocating in the 5'-3' direction. This creates two antiparallel DNA single strands (ssDNA). The leading ssDNA polymer is the template for DNA polymerase III holoenzyme which synthesizes a continuous strand.. It catalyses the reaction ATP + H2O = ADP + phosphate + H(+). A replicative DNA helicase, it participates in initiation and elongation during DNA replication. Travels ahead of the DNA replisome, separating dsDNA into templates for DNA synthesis. A processive ATP-dependent 5'-3' DNA helicase it has DNA-dependent ATPase activity. In Chlamydia psittaci (Chlamydophila psittaci), this protein is Probable plasmid replicative DNA helicase.